A 504-amino-acid chain; its full sequence is Peroxisomal catalase (504 aa).

Residues His-63 and Asn-136 contribute to the active site. Residue Tyr-345 participates in heme binding. Positions Asn-502–Phe-504 match the Microbody targeting signal motif.

The protein belongs to the catalase family. Heme is required as a cofactor.

It is found in the peroxisome matrix. It carries out the reaction 2 H2O2 = O2 + 2 H2O. In terms of biological role, catalyzes the degradation of hydrogen peroxide (H(2)O(2)) generated by peroxisomal oxidases to water and oxygen, thereby protecting cells from the toxic effects of hydrogen peroxide. The protein is Peroxisomal catalase (CTA1) of Candida boidinii (Yeast).